The sequence spans 272 residues: Ribosomal RNA small subunit methyltransferase A (272 aa).

S-adenosyl-L-methionine-binding residues include Asn-20, Leu-22, Gly-47, Glu-68, Asp-93, and Asn-114.

It belongs to the class I-like SAM-binding methyltransferase superfamily. rRNA adenine N(6)-methyltransferase family. RsmA subfamily.

The protein resides in the cytoplasm. It carries out the reaction adenosine(1518)/adenosine(1519) in 16S rRNA + 4 S-adenosyl-L-methionine = N(6)-dimethyladenosine(1518)/N(6)-dimethyladenosine(1519) in 16S rRNA + 4 S-adenosyl-L-homocysteine + 4 H(+). Functionally, specifically dimethylates two adjacent adenosines (A1518 and A1519) in the loop of a conserved hairpin near the 3'-end of 16S rRNA in the 30S particle. May play a critical role in biogenesis of 30S subunits. The sequence is that of Ribosomal RNA small subunit methyltransferase A from Aliivibrio fischeri (strain ATCC 700601 / ES114) (Vibrio fischeri).